A 117-amino-acid chain; its full sequence is uncharacterized protein (117 aa).

A run of 3 helical transmembrane segments spans residues 32-52, 56-76, and 87-107; these read VSSS…VTVV, VGVA…VTLL, and LSWC…SFFF.

It is found in the membrane. This is an uncharacterized protein from Saccharomyces cerevisiae (strain ATCC 204508 / S288c) (Baker's yeast).